The primary structure comprises 101 residues: MKIISMSMDSWIQRAALMLLGLVIVAPFFGWTASIVGYAEPLENAAKMTGATDAAMNLNPGVLPDYTVGGFSGPIGTLISAGVGTVLTLIVAFGAGRLLES.

The first 32 residues, Met-1–Thr-32, serve as a signal peptide directing secretion. Residues Ile-75 to Ala-95 form a helical membrane-spanning segment.

The protein localises to the cell membrane. In terms of biological role, may be involved in metal transport. This Haloquadratum walsbyi (strain DSM 16790 / HBSQ001) protein is Putative metal transport protein HQ_3622A.